A 316-amino-acid chain; its full sequence is Phosphate acyltransferase (316 aa).

This sequence belongs to the PlsX family. In terms of assembly, homodimer. Probably interacts with PlsY.

The protein localises to the cytoplasm. The catalysed reaction is a fatty acyl-[ACP] + phosphate = an acyl phosphate + holo-[ACP]. It functions in the pathway lipid metabolism; phospholipid metabolism. Catalyzes the reversible formation of acyl-phosphate (acyl-PO(4)) from acyl-[acyl-carrier-protein] (acyl-ACP). This enzyme utilizes acyl-ACP as fatty acyl donor, but not acyl-CoA. The protein is Phosphate acyltransferase of Chlamydia caviae (strain ATCC VR-813 / DSM 19441 / 03DC25 / GPIC) (Chlamydophila caviae).